A 226-amino-acid polypeptide reads, in one-letter code: Cytochrome c oxidase subunit 2 (226 aa).

Over 1 to 25 the chain is Mitochondrial intermembrane; the sequence is MNTWLLSLQNSNSPTYDMMIFFHDF. A helical transmembrane segment spans residues 26–47; it reads TMMILIFITLLILFIMFTMINN. Topologically, residues 48–61 are mitochondrial matrix; it reads NLINRFLLQGHFIE. The helical transmembrane segment at 62–81 threads the bilayer; that stretch reads LIWTITPMIILILIAIPSFK. The Mitochondrial intermembrane portion of the chain corresponds to 82-226; that stretch reads ILYLTDEMFN…YFKNWLKSFL (145 aa). Cu cation is bound by residues His160, Cys195, Glu197, Cys199, His203, and Met206. Mg(2+) is bound at residue Glu197.

The protein belongs to the cytochrome c oxidase subunit 2 family. In terms of assembly, component of the cytochrome c oxidase (complex IV, CIV), a multisubunit enzyme composed of a catalytic core of 3 subunits and several supernumerary subunits. The complex exists as a monomer or a dimer and forms supercomplexes (SCs) in the inner mitochondrial membrane with ubiquinol-cytochrome c oxidoreductase (cytochrome b-c1 complex, complex III, CIII). Cu cation is required as a cofactor.

It is found in the mitochondrion inner membrane. It carries out the reaction 4 Fe(II)-[cytochrome c] + O2 + 8 H(+)(in) = 4 Fe(III)-[cytochrome c] + 2 H2O + 4 H(+)(out). In terms of biological role, component of the cytochrome c oxidase, the last enzyme in the mitochondrial electron transport chain which drives oxidative phosphorylation. The respiratory chain contains 3 multisubunit complexes succinate dehydrogenase (complex II, CII), ubiquinol-cytochrome c oxidoreductase (cytochrome b-c1 complex, complex III, CIII) and cytochrome c oxidase (complex IV, CIV), that cooperate to transfer electrons derived from NADH and succinate to molecular oxygen, creating an electrochemical gradient over the inner membrane that drives transmembrane transport and the ATP synthase. Cytochrome c oxidase is the component of the respiratory chain that catalyzes the reduction of oxygen to water. Electrons originating from reduced cytochrome c in the intermembrane space (IMS) are transferred via the dinuclear copper A center (CU(A)) of subunit 2 and heme A of subunit 1 to the active site in subunit 1, a binuclear center (BNC) formed by heme A3 and copper B (CU(B)). The BNC reduces molecular oxygen to 2 water molecules using 4 electrons from cytochrome c in the IMS and 4 protons from the mitochondrial matrix. This is Cytochrome c oxidase subunit 2 (COII) from Lasius sp.